We begin with the raw amino-acid sequence, 285 residues long: MKLCGFDVGLDRPFFLISGPCVVESEQLQMDVAGRLKEITAALGIPFIFKSSYDKANRSSGTSFRGPGMEKGLEILAKVRRDLQVPVLTDVHSEAEIPVVAQHVDVLQTPAFLCRQTDFIRAVAQSGKPVNIKKGQFLAPGDMKNVIQKARDAAREKGLPDDVFMACERGASFGYNNLVSDMRSLAIMRETGSPVVFDATHSVQLPGGQGTSSGGQREFVPVLSRAAIAVGVAGVFMETHPDPAKALSDGPNAVPLKHMKALLEQLVSIDRVIKAQPLLENDFSC.

Belongs to the KdsA family.

The protein resides in the cytoplasm. It carries out the reaction D-arabinose 5-phosphate + phosphoenolpyruvate + H2O = 3-deoxy-alpha-D-manno-2-octulosonate-8-phosphate + phosphate. Its pathway is carbohydrate biosynthesis; 3-deoxy-D-manno-octulosonate biosynthesis; 3-deoxy-D-manno-octulosonate from D-ribulose 5-phosphate: step 2/3. The protein operates within bacterial outer membrane biogenesis; lipopolysaccharide biosynthesis. The polypeptide is 2-dehydro-3-deoxyphosphooctonate aldolase (Methylibium petroleiphilum (strain ATCC BAA-1232 / LMG 22953 / PM1)).